The following is a 185-amino-acid chain: Ribosome-recycling factor (185 aa).

Belongs to the RRF family.

It localises to the cytoplasm. Responsible for the release of ribosomes from messenger RNA at the termination of protein biosynthesis. May increase the efficiency of translation by recycling ribosomes from one round of translation to another. This Thermomicrobium roseum (strain ATCC 27502 / DSM 5159 / P-2) protein is Ribosome-recycling factor.